Here is a 283-residue protein sequence, read N- to C-terminus: S-adenosylmethionine mitochondrial carrier protein homolog (283 aa).

Solcar repeat units follow at residues 11–84 (LKFF…GKQF), 93–178 (DSPY…FKLQ), and 187–275 (STPF…TTRI). A run of 6 helical transmembrane segments spans residues 14-34 (FHAL…LFPI), 55-75 (GIYK…ALFF), 99-119 (MAAA…VEIA), 152-172 (RGFG…FPLW), 190-210 (FSVA…TTPL), and 248-268 (FAGF…FFGF).

This sequence belongs to the mitochondrial carrier (TC 2.A.29) family.

The protein localises to the mitochondrion inner membrane. Functionally, mitochondrial solute carriers shuttle metabolites, nucleotides, and cofactors through the mitochondrial inner membrane. May mediate the transport of S-adenosylmethionine (SAM) into the mitochondria. This chain is S-adenosylmethionine mitochondrial carrier protein homolog, found in Drosophila melanogaster (Fruit fly).